We begin with the raw amino-acid sequence, 154 residues long: Transcriptional repressor NrdR (154 aa).

The segment at 3 to 34 (CPHCHKNGSRVVDSRPSEDGSFIRRRRECIHC) is a zinc-finger region. Residues 49-139 (LLVIKKDGTR…VYRQFKDVDA (91 aa)) form the ATP-cone domain.

Belongs to the NrdR family. Zn(2+) serves as cofactor.

Functionally, negatively regulates transcription of bacterial ribonucleotide reductase nrd genes and operons by binding to NrdR-boxes. The polypeptide is Transcriptional repressor NrdR (Limosilactobacillus reuteri (strain DSM 20016) (Lactobacillus reuteri)).